The sequence spans 52 residues: Conotoxin Ac4.3a (52 aa).

The propeptide occupies 1 to 11; the sequence is SDFRNAAVHER. A Pyrrolidone carboxylic acid modification is found at Q12. E14 carries the post-translational modification 4-carboxyglutamate. T18 and T20 each carry an O-linked (HexNAc...) threonine glycan. 4-hydroxyproline occurs at positions 28, 33, and 47. Position 47 is a proline amide (P47). A propeptide spanning residues 48-52 is cleaved from the precursor; the sequence is GRRND.

This sequence belongs to the conotoxin A superfamily. In terms of processing, contains 3 disulfide bonds. Expressed by the venom duct.

It localises to the secreted. In terms of biological role, probable neurotoxin with ion channel inhibitor activity. This chain is Conotoxin Ac4.3a, found in Conus achatinus (Little frog cone).